Here is a 1184-residue protein sequence, read N- to C-terminus: Probable phospholipid-transporting ATPase 12 (1184 aa).

Over 1–75 the chain is Cytoplasmic; that stretch reads MATVSGRRRK…TTKYTLATFL (75 aa). A helical transmembrane segment spans residues 76–97; the sequence is PKSLFEQFRRVANFYFLVVGIL. At 98–101 the chain is on the extracellular side; sequence SFTP. Residues 102–124 form a helical membrane-spanning segment; sequence LAPYTAVSAIVPLTFVILATMFK. The Cytoplasmic portion of the chain corresponds to 125 to 306; that stretch reads EGVEDWRRKQ…SMIERKMDKI (182 aa). A helical transmembrane segment spans residues 307–328; it reads IYLMFLMVFSLAFFGSVLFGIW. Topologically, residues 329–364 are extracellular; that stretch reads TRDDFQNGVMERWYLKPDDSSIFFDPKRAPMAAIYH. The chain crosses the membrane as a helical span at residues 365-382; the sequence is FLTALMLNSYFIPISLYV. Over 383–921 the chain is Cytoplasmic; that stretch reads SIEIVKVLQS…HGHWCYRRIS (539 aa). The 4-aspartylphosphate intermediate role is filled by aspartate 430. Residues aspartate 866 and aspartate 870 each contribute to the Mg(2+) site. The helical transmembrane segment at 922–941 threads the bilayer; it reads KMICYFFYKNITFGFTLFLY. Residues 942-955 lie on the Extracellular side of the membrane; it reads EAYTSFSATPAYND. A helical transmembrane segment spans residues 956-975; the sequence is WYLSLYSVFFTSLPVICLGI. Residues 976-1005 lie on the Cytoplasmic side of the membrane; it reads FDQDVSAPFCLKFPVLYQEGVQNLLFSWRR. The helical transmembrane segment at 1006-1028 threads the bilayer; sequence ILSWMFHGFCSAIIIFFLCKTSL. Residues 1029–1041 lie on the Extracellular side of the membrane; that stretch reads ESQAFNHEGKTAG. The chain crosses the membrane as a helical span at residues 1042–1064; sequence RDILGGTMYTCVVWVVSLQMVLT. Over 1065–1070 the chain is Cytoplasmic; that stretch reads ISYFTL. Residues 1071–1091 form a helical membrane-spanning segment; it reads IQHVVVWGSVVIWYLFLMVYG. Residues 1092–1108 lie on the Extracellular side of the membrane; that stretch reads SLPIRMSTDAYMVFLEA. The chain crosses the membrane as a helical span at residues 1109-1133; the sequence is LAPAPSYWITTLFVVLSTMMPYFIF. Topologically, residues 1134 to 1184 are cytoplasmic; that stretch reads SAIQMRFFPMSHGTVQLLRYEDQCSNSGNFEMGRQGSVRPTLVMRSHQPES.

The protein belongs to the cation transport ATPase (P-type) (TC 3.A.3) family. Type IV subfamily.

Its subcellular location is the membrane. It catalyses the reaction ATP + H2O + phospholipidSide 1 = ADP + phosphate + phospholipidSide 2.. Involved in transport of phospholipids. The sequence is that of Probable phospholipid-transporting ATPase 12 from Arabidopsis thaliana (Mouse-ear cress).